We begin with the raw amino-acid sequence, 312 residues long: tRNA uridine(34) hydroxylase (312 aa).

One can recognise a Rhodanese domain in the interval 147–237 (SDRNVIFIDM…GILGYVHDAN (91 aa)). Cys201 (cysteine persulfide intermediate) is an active-site residue.

It belongs to the TrhO family.

It catalyses the reaction uridine(34) in tRNA + AH2 + O2 = 5-hydroxyuridine(34) in tRNA + A + H2O. Functionally, catalyzes oxygen-dependent 5-hydroxyuridine (ho5U) modification at position 34 in tRNAs. This chain is tRNA uridine(34) hydroxylase, found in Buchnera aphidicola subsp. Schizaphis graminum (strain Sg).